The following is a 335-amino-acid chain: MRN complex-interacting protein (335 aa).

2 disordered regions span residues 75–102 and 118–194; these read EEAVNGSEEENAGPLQAEAGSQQAPSKP and QELD…ALST. Ser-100 bears the Phosphoserine mark. The span at 129 to 142 shows a compositional bias: polar residues; it reads TQLSTSAERPSSPA. The short motif at 145–148 is the Nuclear localization signal (NLS) element; sequence RKRK. Positions 177–194 are enriched in polar residues; it reads STGLFGTEQQGTSPALST. Residues 203–230 form a necessary for the association with the MRN complex region; it reads FPRWKLPSPVTQVNAPSSKWARFLLAPG. The segment at 273-335 is disordered; it reads RPPQAIHTTT…TTGEDFDDDL (63 aa). Residues 286–297 show a composition bias toward basic and acidic residues; the sequence is DRPDRKTREQPR.

The protein belongs to the MRNIP family. As to quaternary structure, associates with the MRE11-RAD50-NBN (MRN) damage-sensing complex; this association is constitutive. Interacts with MRE11. Interacts with NBN. Interacts with RAD50. Post-translationally, phosphorylated; phosphorylation is constitutive and occurs in the absence of any DNA-damaging stimulus. Phosphorylation is necessary for its nuclear retention.

It localises to the nucleus. Its subcellular location is the nucleoplasm. Its function is as follows. Plays a role in the cellular response to DNA damage and the maintenance of genome stability through its association with the MRN damage-sensing complex. Promotes chromatin loading and activity of the MRN complex to facilitate subsequent ATM-mediated DNA damage response signaling and DNA repair. This chain is MRN complex-interacting protein, found in Mus musculus (Mouse).